The sequence spans 188 residues: Xanthine phosphoribosyltransferase (188 aa).

Leu-20 and Asn-27 together coordinate xanthine. 127-131 (AYGNA) lines the 5-phospho-alpha-D-ribose 1-diphosphate pocket. Residue Lys-155 participates in xanthine binding.

Belongs to the purine/pyrimidine phosphoribosyltransferase family. Xpt subfamily. In terms of assembly, homodimer.

It is found in the cytoplasm. It carries out the reaction XMP + diphosphate = xanthine + 5-phospho-alpha-D-ribose 1-diphosphate. It participates in purine metabolism; XMP biosynthesis via salvage pathway; XMP from xanthine: step 1/1. Functionally, converts the preformed base xanthine, a product of nucleic acid breakdown, to xanthosine 5'-monophosphate (XMP), so it can be reused for RNA or DNA synthesis. This chain is Xanthine phosphoribosyltransferase, found in Parabacteroides distasonis (strain ATCC 8503 / DSM 20701 / CIP 104284 / JCM 5825 / NCTC 11152).